Here is a 439-residue protein sequence, read N- to C-terminus: Ectonucleotide pyrophosphatase/phosphodiesterase family member 7 (439 aa).

The N-terminal stretch at 1 to 21 (MGHSAVLLCVALAILPACVTG) is a signal peptide. At 22-414 (APVQRQHKLL…ILRPMLRSGS (393 aa)) the chain is on the extracellular side. The Zn(2+) site is built by aspartate 36 and threonine 72. The tract at residues 69–75 (VTMTSPC) is required for enzyme activity. Catalysis depends on threonine 72, which acts as the Nucleophile. Asparagine 93 contacts substrate. Asparagine 97, asparagine 118, asparagine 143, and asparagine 165 each carry an N-linked (GlcNAc...) asparagine glycan. Zn(2+) is bound by residues aspartate 196, histidine 200, aspartate 243, and histidine 244. Asparagine 264 carries N-linked (GlcNAc...) asparagine glycosylation. Histidine 350 lines the Zn(2+) pocket. A helical transmembrane segment spans residues 415-435 (ASLLSSQHHLVALLVGILTCL). Residues 436-439 (AKVL) are Cytoplasmic-facing.

Zn(2+) serves as cofactor. Post-translationally, N-glycosylated; required for activity and transport to the plasma membrane. In terms of tissue distribution, expressed in liver and small intestine.

Its subcellular location is the cell membrane. It catalyses the reaction a sphingomyelin + H2O = phosphocholine + an N-acylsphing-4-enine + H(+). It carries out the reaction a 1-O-alkyl-2-acetyl-sn-glycero-3-phosphocholine + H2O = a 1-O-alkyl-2-acetyl-sn-glycerol + phosphocholine + H(+). The enzyme catalyses 1-O-octadecyl-2-acetyl-sn-glycero-3-phosphocholine + H2O = 1-O-octadecyl-2-acetyl-sn-glycerol + phosphocholine + H(+). The catalysed reaction is 1-hexadecanoyl-sn-glycero-3-phosphocholine + H2O = 1-hexadecanoyl-sn-glycerol + phosphocholine + H(+). Functionally, choline-specific phosphodiesterase that hydrolyzes sphingomyelin releasing the ceramide and phosphocholine and therefore is involved in sphingomyelin digestion, ceramide formation, and fatty acid (FA) absorption in the gastrointestinal tract. Also has phospholipase C activity and can also cleave phosphocholine from palmitoyl lyso-phosphatidylcholine and platelet-activating factor (PAF) leading to its inactivation. Does not have nucleotide pyrophosphatase activity. May promote cholesterol absorption by affecting the levels of sphingomyelin derived from either diet or endogenous sources, in the intestinal lumen. The sequence is that of Ectonucleotide pyrophosphatase/phosphodiesterase family member 7 from Mus musculus (Mouse).